The following is a 273-amino-acid chain: Formamidopyrimidine-DNA glycosylase (273 aa).

P2 serves as the catalytic Schiff-base intermediate with DNA. E3 (proton donor) is an active-site residue. The active-site Proton donor; for beta-elimination activity is the K58. Residues H91 and R110 each coordinate DNA. Residues 238–272 (QVYGKTGQPCPRCGCLIKKIKVGGRGTHYCPRCQC) form an FPG-type zinc finger. R262 (proton donor; for delta-elimination activity) is an active-site residue.

This sequence belongs to the FPG family. As to quaternary structure, monomer. The cofactor is Zn(2+).

It catalyses the reaction Hydrolysis of DNA containing ring-opened 7-methylguanine residues, releasing 2,6-diamino-4-hydroxy-5-(N-methyl)formamidopyrimidine.. The enzyme catalyses 2'-deoxyribonucleotide-(2'-deoxyribose 5'-phosphate)-2'-deoxyribonucleotide-DNA = a 3'-end 2'-deoxyribonucleotide-(2,3-dehydro-2,3-deoxyribose 5'-phosphate)-DNA + a 5'-end 5'-phospho-2'-deoxyribonucleoside-DNA + H(+). In terms of biological role, involved in base excision repair of DNA damaged by oxidation or by mutagenic agents. Acts as a DNA glycosylase that recognizes and removes damaged bases. Has a preference for oxidized purines, such as 7,8-dihydro-8-oxoguanine (8-oxoG). Has AP (apurinic/apyrimidinic) lyase activity and introduces nicks in the DNA strand. Cleaves the DNA backbone by beta-delta elimination to generate a single-strand break at the site of the removed base with both 3'- and 5'-phosphates. The sequence is that of Formamidopyrimidine-DNA glycosylase from Streptococcus agalactiae serotype Ia (strain ATCC 27591 / A909 / CDC SS700).